The chain runs to 926 residues: Peripheral plasma membrane protein CASK (926 aa).

In terms of domain architecture, Protein kinase spans 12–276 (YELCEVIGKG…VYEALNHPWL (265 aa)). ATP contacts are provided by residues 18–26 (IGKGPFSVV) and Lys41. Ser51 is modified (phosphoserine). Residue Asp141 is part of the active site. Residues Ser151 and Ser155 each carry the phosphoserine; by autocatalysis modification. Thr182 carries the post-translational modification Phosphothreonine. A calmodulin-binding region spans residues 305–315 (KGAVLAAVSSH). Ser313 carries the phosphoserine modification. L27 domains follow at residues 343–398 (AERA…SPQI) and 402–455 (PSDA…YSDE). Positions 482–909 (MENVTRVRLV…DETIRHLEEA (428 aa)) are required for interaction with NRXN1 (via C-terminal tail). The region spanning 490–571 (LVQFQKNTDE…SITFKIVPSY (82 aa)) is the PDZ domain. A phosphoserine mark is found at Ser570 and Tyr571. The interval 574–610 (QSSSCERDSPSTSRQSPANGHSSTNNSVSDLPSTTQP) is disordered. The SH3 domain occupies 612–682 (GRQIYVRAQF…PSPELQEWRV (71 aa)). In terms of domain architecture, Guanylate kinase-like spans 739–911 (RKTLVLLGAH…TIRHLEEAVE (173 aa)).

In the N-terminal section; belongs to the protein kinase superfamily. CAMK Ser/Thr protein kinase family. CaMK subfamily. It belongs to the MAGUK family. In terms of assembly, CASK and LIN7 form a tripartite complex with CASKIN1. Component of the brain-specific heterotrimeric complex (LIN-10-LIN-2-LIN-7 complex) composed of at least APBA1, CASK, and LIN7, which associates with the motor protein KIF17 to transport vesicles along microtubules. Forms a heterotrimeric complex with DLG1 and LIN7B via their L27 domains. Identified in a complex with ACTN4, IQGAP1, MAGI2, NPHS1, SPTAN1 and SPTBN1. Part of a complex containing CASK, TBR1 and TSPYL2. Interacts with WHRN. Interacts (via the PDZ, SH3 and guanylate kinase-like domains) with NRXN1 (via C-terminus). Interacts with CASKIN1, APBA1, LIN7(A/B/C), and L27 domain of DLG1 and isoform 2 of DLG4. Interacts with FCHSD2. Interacts with KIRREL3. Interacts with TBR1. Interacts with TSPYL2. It depends on Unlike other protein kinases, does not require a divalent cation such as magnesium for catalytic activity. as a cofactor.

It localises to the nucleus. Its subcellular location is the cytoplasm. The protein localises to the cell membrane. The enzyme catalyses L-seryl-[protein] + ATP = O-phospho-L-seryl-[protein] + ADP + H(+). It carries out the reaction L-threonyl-[protein] + ATP = O-phospho-L-threonyl-[protein] + ADP + H(+). With respect to regulation, differs from archetypal CaMK members in that the kinase domain exhibits a constitutively active conformation and the autoinhibitory region does not engage in direct contact with the ATP-binding cleft, although it still binds Ca(2+)/CAM. Its function is as follows. Multidomain scaffolding Mg(2+)-independent protein kinase that catalyzes the phosphotransfer from ATP to proteins such as NRXN1, and plays a role in synaptic transmembrane protein anchoring and ion channel trafficking. Contributes to neural development and regulation of gene expression via interaction with the transcription factor TBR1. Binds to cell-surface proteins, including amyloid precursor protein, neurexins, and syndecans. May mediate a link between the extracellular matrix and the actin cytoskeleton via its interaction with syndecan and with the actin/spectrin-binding protein 4.1. Component of the LIN-10-LIN-2-LIN-7 complex, which associates with the motor protein KIF17 to transport vesicles containing N-methyl-D-aspartate (NMDA) receptor subunit NR2B along microtubules. The chain is Peripheral plasma membrane protein CASK from Mus musculus (Mouse).